Consider the following 122-residue polypeptide: T cell receptor gamma variable 9 (122 aa).

An N-terminal signal peptide occupies residues Met1–Gly20. An Ig-like domain is found at Pro27–Val122. Cys43 and Cys117 are disulfide-bonded.

Gamma-delta TR is a heterodimer composed of a gamma and delta chain; disulfide-linked. The gamma-delta TR is associated with the transmembrane signaling CD3 coreceptor proteins following the stoichiometry: a single gamma-delta TR heterodimer associates with one CD3D-CD3E heterodimer, one CD3G-CD3E heterodimer and one CD247 homodimer forming a stable octameric structure. Upon activation, gamma-delta TR complex associates with FCER1G to initiate intracellular signaling.

The protein localises to the cell membrane. Functionally, v region of the variable domain of T cell receptor (TR) gamma chain that participates in the antigen recognition. Gamma-delta TRs recognize a variety of self and foreign non-peptide antigens frequently expressed at the epithelial boundaries between the host and external environment, including endogenous lipids presented by MH-like protein CD1D and phosphoantigens presented by butyrophilin-like molecule BTN3A1. Upon antigen recognition induces rapid, innate-like immune responses involved in pathogen clearance and tissue repair. Binding of gamma-delta TR complex to antigen triggers phosphorylation of immunoreceptor tyrosine-based activation motifs (ITAMs) in the CD3 chains by the LCK and FYN kinases, allowing the recruitment, phosphorylation, and activation of ZAP70 that facilitates phosphorylation of the scaffolding proteins LCP2 and LAT. This lead to the formation of a supramolecular signalosome that recruits the phospholipase PLCG1, resulting in calcium mobilization and ERK activation, ultimately leading to T cell expansion and differentiation into effector cells. Gamma-delta TRs are produced through somatic rearrangement of a limited repertoire of variable (V), diversity (D), and joining (J) genes. The potential diversity of gamma-delta TRs is conferred by the unique ability to rearrange (D) genes in tandem and to utilize all three reading frames. The combinatorial diversity is considerably increased by the sequence exonuclease trimming and random nucleotide (N) region additions which occur during the V-(D)-J rearrangements. The polypeptide is T cell receptor gamma variable 9 (Homo sapiens (Human)).